Consider the following 287-residue polypeptide: Pantothenate synthetase (287 aa).

Residue 30–37 (MGYLHEGH) coordinates ATP. H37 functions as the Proton donor in the catalytic mechanism. Residue Q61 participates in (R)-pantoate binding. Q61 is a binding site for beta-alanine. 150-153 (GMKD) is an ATP binding site. Q156 is a binding site for (R)-pantoate. ATP contacts are provided by residues V179 and 187 to 190 (LSSR).

It belongs to the pantothenate synthetase family. Homodimer.

Its subcellular location is the cytoplasm. The enzyme catalyses (R)-pantoate + beta-alanine + ATP = (R)-pantothenate + AMP + diphosphate + H(+). Its pathway is cofactor biosynthesis; (R)-pantothenate biosynthesis; (R)-pantothenate from (R)-pantoate and beta-alanine: step 1/1. Its function is as follows. Catalyzes the condensation of pantoate with beta-alanine in an ATP-dependent reaction via a pantoyl-adenylate intermediate. This is Pantothenate synthetase from Coprothermobacter proteolyticus (strain ATCC 35245 / DSM 5265 / OCM 4 / BT).